The primary structure comprises 388 residues: Arginine biosynthesis bifunctional protein ArgJ (388 aa).

Substrate-binding residues include T150, K172, T183, E263, N383, and T388. T183 (nucleophile) is an active-site residue.

The protein belongs to the ArgJ family. Heterotetramer of two alpha and two beta chains.

The protein resides in the cytoplasm. It catalyses the reaction N(2)-acetyl-L-ornithine + L-glutamate = N-acetyl-L-glutamate + L-ornithine. The catalysed reaction is L-glutamate + acetyl-CoA = N-acetyl-L-glutamate + CoA + H(+). It functions in the pathway amino-acid biosynthesis; L-arginine biosynthesis; L-ornithine and N-acetyl-L-glutamate from L-glutamate and N(2)-acetyl-L-ornithine (cyclic): step 1/1. It participates in amino-acid biosynthesis; L-arginine biosynthesis; N(2)-acetyl-L-ornithine from L-glutamate: step 1/4. In terms of biological role, catalyzes two activities which are involved in the cyclic version of arginine biosynthesis: the synthesis of N-acetylglutamate from glutamate and acetyl-CoA as the acetyl donor, and of ornithine by transacetylation between N(2)-acetylornithine and glutamate. This is Arginine biosynthesis bifunctional protein ArgJ from Corynebacterium efficiens (strain DSM 44549 / YS-314 / AJ 12310 / JCM 11189 / NBRC 100395).